Here is a 979-residue protein sequence, read N- to C-terminus: UPF0182 protein MT0070 (979 aa).

The next 7 helical transmembrane spans lie at 19 to 41 (LVTA…DIYV), 63 to 85 (LAIV…LLAY), 114 to 136 (LFGW…FDWV), 174 to 196 (WLFV…FGGL), 208 to 230 (AARV…AYWL), 261 to 280 (LVLV…AIFL), and 285 to 307 (IPAM…WPLL). The interval 894-948 (VFGPGTGRVATXPGGDAASAPPPGAGGPAPPQGVPPPRTTQPPAAPPRGPDVPPA) is disordered. Residues 913–946 (APPPGAGGPAPPQGVPPPRTTQPPAAPPRGPDVP) show a composition bias toward pro residues.

Belongs to the UPF0182 family.

The protein resides in the cell membrane. In Mycobacterium tuberculosis (strain CDC 1551 / Oshkosh), this protein is UPF0182 protein MT0070.